The primary structure comprises 186 residues: Peptidoglycan-recognition protein SD (186 aa).

An N-terminal signal peptide occupies residues 1-18; sequence MTWIGLLIVGLTAIAVQG. The N-acetylmuramoyl-L-alanine amidase domain maps to 47–169; it reads AVIAHTAGGA…RQVSATKSPG (123 aa). Cys57 and Cys63 form a disulfide bridge. An N-linked (GlcNAc...) asparagine glycan is attached at Asn181.

Belongs to the N-acetylmuramoyl-L-alanine amidase 2 family. As to expression, in larvae, it is mainly expressed in fat body. Also expressed in uninduced hemocytes and mbn-2 cells.

It localises to the secreted. Its function is as follows. Peptidoglycan-recognition protein that plays a key role in innate immunity by binding to peptidoglycans (PGN) of Gram-positive bacteria and activating the Toll pathway. Has no activity against on Gram-negative bacteria and fungi. Shows some partial redundancy with PRPGP-SA in Gram-positive bacteria recognition. May act by activating the proteolytic cleavage of Spatzle and the subsequent activation of Toll pathway. Recognizes S.aureus PGN. The chain is Peptidoglycan-recognition protein SD (PGRP-SD) from Drosophila melanogaster (Fruit fly).